Consider the following 281-residue polypeptide: Transcription factor E2F6 (281 aa).

Lys-9 is covalently cross-linked (Glycyl lysine isopeptide (Lys-Gly) (interchain with G-Cter in SUMO2)). A DNA-binding region spans residues 50–129; the sequence is YVSMRKALKV…SKNHIRWIGS (80 aa). The DEF box signature appears at 95 to 129; the sequence is KLGVRKRRVYDITNVLDGIDLVEKKSKNHIRWIGS. Residues 130-222 form a dimerization region; the sequence is DLSNFGAVPQ…PAPREDSITV (93 aa). Residues 143-164 are leucine-zipper; that stretch reads LQEELSDLSAMEDALDELIKDC. Positions 173–281 are transcription repression; it reads DDKENERLAY…QSEELLEVSN (109 aa). The interval 241-281 is disordered; sequence GQTSNKRSEGVGTSSSESTHPEGPEEEENPQQSEELLEVSN.

Belongs to the E2F/DP family. In terms of assembly, forms heterodimers with DP family members TFDP1 or TFDP2. Component of the DRTF1/E2F transcription factor complex. Part of the E2F6.com-1 complex in G0 phase composed of E2F6, MGA, MAX, TFDP1, CBX3, BAT8, EUHMTASE1, RING1, RNF2, MBLR, L3MBTL2 and YAF2. Component of some MLL1/MLL complex, at least composed of the core components KMT2A/MLL1, ASH2L, HCFC1/HCF1, WDR5 and RBBP5, as well as the facultative components BACC1, CHD8, E2F6, HSP70, INO80C, KANSL1, LAS1L, MAX, MCRS1, MGA, KAT8/MOF, PELP1, PHF20, PRP31, RING2, RUVB1/TIP49A, RUVB2/TIP49B, SENP3, TAF1, TAF4, TAF6, TAF7, TAF9 and TEX10. In terms of tissue distribution, expressed in all tissues examined. Highest levels in placenta, skeletal muscle, heart, ovary, kidney, small intestine and spleen.

It is found in the nucleus. In terms of biological role, inhibitor of E2F-dependent transcription. Binds DNA cooperatively with DP proteins through the E2 recognition site, 5'-TTTC[CG]CGC-3'. Has a preference for the 5'-TTTCCCGC-3' E2F recognition site. E2F6 lacks the transcriptional activation and pocket protein binding domains. Appears to regulate a subset of E2F-dependent genes whose products are required for entry into the cell cycle but not for normal cell cycle progression. Represses expression of some meiosis-specific genes, including SLC25A31/ANT4. May silence expression via the recruitment of a chromatin remodeling complex containing histone H3-K9 methyltransferase activity. Overexpression delays the exit of cells from the S-phase. This is Transcription factor E2F6 from Homo sapiens (Human).